Here is a 315-residue protein sequence, read N- to C-terminus: tRNA pseudouridine synthase B (315 aa).

The Nucleophile role is filled by aspartate 47.

This sequence belongs to the pseudouridine synthase TruB family. Type 1 subfamily.

The catalysed reaction is uridine(55) in tRNA = pseudouridine(55) in tRNA. Responsible for synthesis of pseudouridine from uracil-55 in the psi GC loop of transfer RNAs. The chain is tRNA pseudouridine synthase B from Shewanella pealeana (strain ATCC 700345 / ANG-SQ1).